A 740-amino-acid chain; its full sequence is Ion-translocating oxidoreductase complex subunit C (740 aa).

4Fe-4S ferredoxin-type domains follow at residues 369-397 (GEPQEEQSCIRCSACADACPADLLPQQLY) and 407-436 (KATTHNIADCIECGACAWVCPSNIPLVQYF). [4Fe-4S] cluster contacts are provided by cysteine 377, cysteine 380, cysteine 383, cysteine 387, cysteine 416, cysteine 419, cysteine 422, and cysteine 426. A disordered region spans residues 602–717 (KLEQQQANAE…PEEQVDPRKA (116 aa)). Composition is skewed to low complexity over residues 605–615 (QQQANAEPEQQ) and 637–647 (QQQANAEPEQQ).

Belongs to the 4Fe4S bacterial-type ferredoxin family. RnfC subfamily. As to quaternary structure, the complex is composed of six subunits: RsxA, RsxB, RsxC, RsxD, RsxE and RsxG. The cofactor is [4Fe-4S] cluster.

The protein localises to the cell inner membrane. Part of a membrane-bound complex that couples electron transfer with translocation of ions across the membrane. Required to maintain the reduced state of SoxR. The sequence is that of Ion-translocating oxidoreductase complex subunit C from Escherichia coli (strain ATCC 8739 / DSM 1576 / NBRC 3972 / NCIMB 8545 / WDCM 00012 / Crooks).